Consider the following 445-residue polypeptide: Trigger factor (445 aa).

The region spanning 162–247 (GDQVTIDAIG…IKAVHTAEPT (86 aa)) is the PPIase FKBP-type domain.

The protein belongs to the FKBP-type PPIase family. Tig subfamily.

The protein resides in the cytoplasm. It catalyses the reaction [protein]-peptidylproline (omega=180) = [protein]-peptidylproline (omega=0). Involved in protein export. Acts as a chaperone by maintaining the newly synthesized protein in an open conformation. Functions as a peptidyl-prolyl cis-trans isomerase. The chain is Trigger factor from Rickettsia rickettsii (strain Sheila Smith).